Reading from the N-terminus, the 363-residue chain is S-methylmethionine--homocysteine S-methyltransferase BHMT2 (363 aa).

Residues 11-305 enclose the Hcy-binding domain; it reads KVILERLDSG…YHIRAIAEEL (295 aa). Zn(2+) contacts are provided by Cys208, Cys290, and Cys291.

As to quaternary structure, homotetramer. The cofactor is Zn(2+).

The enzyme catalyses S-methyl-L-methionine + L-homocysteine = 2 L-methionine + H(+). It participates in amino-acid biosynthesis; L-methionine biosynthesis via de novo pathway; L-methionine from L-homocysteine (BhmT route): step 1/1. Functionally, involved in the regulation of homocysteine metabolism. Converts betaine and homocysteine to dimethylglycine and methionine, respectively. This reaction is also required for the irreversible oxidation of choline. In Rattus norvegicus (Rat), this protein is S-methylmethionine--homocysteine S-methyltransferase BHMT2 (Bhmt2).